The sequence spans 879 residues: Phosphoinositide 3-kinase regulatory subunit 5 (879 aa).

Residues 23–100 (SGSTDISSNW…APYIPETSDL (78 aa)) form a heterodimerization region. Disordered regions lie at residues 314–345 (SLED…PKQD) and 570–590 (SSST…PSPS). Residues 315–336 (LEDDVTEEDEEVDFEEVDDKDE) are compositionally biased toward acidic residues. The segment covering 570–589 (SSSTNAPMTNAESPLKSPSP) has biased composition (polar residues). Residues 651-751 (PILADMVLYY…WSNGEKVCTS (101 aa)) are interaction with beta-gamma G protein dimers.

As to quaternary structure, heterodimer. Interacts with a catalytic subunit and with beta-gamma G protein dimers.

The protein localises to the nucleus. The protein resides in the cytoplasm. Its subcellular location is the cell membrane. With respect to regulation, greatly activated by G gamma proteins. In terms of biological role, regulatory subunit of the PI3K gamma complex. Required for recruitment of the catalytic subunit to the plasma membrane via interaction with beta-gamma G protein dimers. Required for G protein-mediated activation of PIK3CG. The protein is Phosphoinositide 3-kinase regulatory subunit 5 (pik3r5) of Xenopus laevis (African clawed frog).